Here is a 274-residue protein sequence, read N- to C-terminus: Large ribosomal subunit protein uL2 (274 aa).

2 disordered regions span residues alanine 28–isoleucine 54 and valine 224–lysine 274. Positions lysine 263–lysine 274 are enriched in basic and acidic residues.

This sequence belongs to the universal ribosomal protein uL2 family. As to quaternary structure, part of the 50S ribosomal subunit. Forms a bridge to the 30S subunit in the 70S ribosome.

Its function is as follows. One of the primary rRNA binding proteins. Required for association of the 30S and 50S subunits to form the 70S ribosome, for tRNA binding and peptide bond formation. It has been suggested to have peptidyltransferase activity; this is somewhat controversial. Makes several contacts with the 16S rRNA in the 70S ribosome. The polypeptide is Large ribosomal subunit protein uL2 (Pseudomonas syringae pv. tomato (strain ATCC BAA-871 / DC3000)).